The primary structure comprises 469 residues: MKIKTRFAPSPTGYLHVGGARTALYSWLFSRHAGGEFVLRIEDTDLERSTQDAIDAIMDGMNWLNLDWNEGPYFQTKRFDRYNAVIDDMLVQDTAYKCYCSKERLEALREKQMENGEKPRYDGHCRDSQCSHTDDEPHVVRFRNPQEGSVIFDDKIRGPIEFSNQELDDLIIRRTDGSPTYNFCVVVDDWDMEISHVIRGEDHINNTPRQINILKALGAPVPEYAHVSMILGDDGKKLSKRHGAVGVMQYRDDGYLPQALLNYLVRLGWSHGDQEIFSIDEMKEFFTLEAINKSASAFNTEKLQWLNHHYINHMPAEEVAVHLAWHVEQLGIETRNGPELKDIVKLLGERCKTLKEMAESCRYFYEDFSEFDADAAKKHLRPVARQPLEAVRAKLAAITAWTPENVHDAIQGTADELGVGMGKVGMPLRVAVTGAGQSPGMDVTVHAIGQNRSLQRIDLALAYIAGREA.

Residues 9 to 19 (PSPTGYLHVGG) carry the 'HIGH' region motif. Zn(2+) is bound by residues cysteine 98, cysteine 100, cysteine 125, and aspartate 127. Positions 237 to 241 (KLSKR) match the 'KMSKS' region motif. Lysine 240 is an ATP binding site.

The protein belongs to the class-I aminoacyl-tRNA synthetase family. Glutamate--tRNA ligase type 1 subfamily. As to quaternary structure, monomer. Requires Zn(2+) as cofactor.

It is found in the cytoplasm. It catalyses the reaction tRNA(Glu) + L-glutamate + ATP = L-glutamyl-tRNA(Glu) + AMP + diphosphate. Functionally, catalyzes the attachment of glutamate to tRNA(Glu) in a two-step reaction: glutamate is first activated by ATP to form Glu-AMP and then transferred to the acceptor end of tRNA(Glu). The polypeptide is Glutamate--tRNA ligase (Serratia proteamaculans (strain 568)).